Consider the following 29-residue polypeptide: Dermaseptin-1.2TR (29 aa).

Val29 carries the valine amide modification.

In terms of tissue distribution, expressed by the skin glands.

The protein localises to the secreted. In terms of biological role, has antimicrobial activity. The sequence is that of Dermaseptin-1.2TR from Phyllomedusa trinitatis (Trinidad leaf frog).